A 196-amino-acid chain; its full sequence is Putative NADH dehydrogenase/NAD(P)H nitroreductase Reut_A1586 (196 aa).

Belongs to the nitroreductase family. HadB/RutE subfamily. FMN is required as a cofactor.

This Cupriavidus pinatubonensis (strain JMP 134 / LMG 1197) (Cupriavidus necator (strain JMP 134)) protein is Putative NADH dehydrogenase/NAD(P)H nitroreductase Reut_A1586.